The primary structure comprises 88 residues: Low calcium response locus protein S (88 aa).

This sequence belongs to the transposase 8 family.

In Yersinia pestis, this protein is Low calcium response locus protein S (lcrS).